A 352-amino-acid chain; its full sequence is Forkhead box protein D5 (352 aa).

Disordered stretches follow at residues 1-32 and 47-92; these read MSLS…LGED and HSEM…GKAK. Acidic residues predominate over residues 20–32; sequence SDEEDEIDILGED. Low complexity predominate over residues 73-82; that stretch reads ESEGGTSKDS. Residues 97 to 191 constitute a DNA-binding region (fork-head); it reads KPPYSYIALI…DNGSFLRRRK (95 aa).

In terms of tissue distribution, expression begins in the newly forming dorsal mesoderm and is maintained during gastrulation at the dorsal blastopore lip (Spemann organizer). At the early neurula stages, expressed in a row of cells along the dorsal midline that are destined to become the fllor plate of the neural tube. At late neurula, expressed within the anterior and posterior poles of the embryo. After neural closure, expression is detected only in the tailtip, the otic vesicle and at the midbrain/hindbrain boundary.

Its subcellular location is the nucleus. Functionally, transcriptional repressor. This Xenopus tropicalis (Western clawed frog) protein is Forkhead box protein D5.